A 295-amino-acid polypeptide reads, in one-letter code: Polyisoprenoid diphosphate/phosphate phosphohydrolase PLPP6 (295 aa).

Disordered stretches follow at residues 1 to 39 (MPSP…SRFE) and 61 to 90 (SESP…PEED). At 1–132 (MPSPRRSMEG…ESSSWGSVRP (132 aa)) the chain is on the cytoplasmic side. The segment covering 16–27 (SASSSSSSPGSP) has biased composition (low complexity). 3 positions are modified to phosphoserine: Ser26, Ser36, and Ser70. A helical transmembrane segment spans residues 133 to 153 (LMKLLEISGHGIPWLLGTLYC). The Lumenal portion of the chain corresponds to 154–164 (LCRSDSWAGRE). A helical membrane pass occupies residues 165-185 (VLMNLLFALLLDLLLVALIKG). A phosphatase sequence motif I region spans residues 184-192 (KGLVRRRRP). Over 186–228 (LVRRRRPAHNQMDMFVTLSVDKYSFPSGHATRAALMSRFILNH) the chain is Cytoplasmic. The segment at 211 to 214 (PSGH) is phosphatase sequence motif II. The Proton donors role is filled by His214. A helical transmembrane segment spans residues 229-249 (LVLAIPLRVLVVLWAFVLGLS). Residues 249 to 260 (SRVMLGRHNVTD) are phosphatase sequence motif III. Topologically, residues 250-260 (RVMLGRHNVTD) are lumenal. His256 acts as the Nucleophile in catalysis. The chain crosses the membrane as a helical span at residues 261–281 (VAFGFFLGYMQYSIVDYCWLS). Topologically, residues 282 to 295 (PHNAPVLFLLWSQR) are cytoplasmic.

It belongs to the PA-phosphatase related phosphoesterase family. In terms of processing, phosphorylation by PKC activates the phosphatase activity towards presqualene diphosphate. Widely expressed. Expressed in most organs, in particular gastrointestinal organs, spleen, placenta, kidney, thymus and brain.

Its subcellular location is the endoplasmic reticulum membrane. The protein localises to the nucleus envelope. The protein resides in the nucleus inner membrane. The enzyme catalyses presqualene diphosphate + H2O = presqualene phosphate + phosphate + H(+). It catalyses the reaction presqualene phosphate + H2O = presqualene alcohol + phosphate. The catalysed reaction is (2E,6E)-farnesyl diphosphate + H2O = (2E,6E)-farnesyl phosphate + phosphate + H(+). It carries out the reaction (2E,6E)-farnesyl phosphate + H2O = (2E,6E)-farnesol + phosphate. The enzyme catalyses (2E,6E,10E)-geranylgeranyl diphosphate + H2O = (2E,6E,10E)-geranylgeranyl phosphate + phosphate + H(+). It catalyses the reaction (2E,6E,10E)-geranylgeranyl phosphate + H2O = (2E,6E,10E)-geranylgeraniol + phosphate. The catalysed reaction is (2E)-geranyl diphosphate + H2O = (2E)-geranyl phosphate + phosphate + H(+). It carries out the reaction (2E)-geranyl phosphate + H2O = (2E)-geraniol + phosphate. The enzyme catalyses 1,2-dihexadecanoyl-sn-glycero-3-phosphate + H2O = 1,2-dihexadecanoyl-sn-glycerol + phosphate. Its activity is regulated as follows. Inhibited by propranolol. Not inhibited by N-ethylmaleimide or bromoenolactome. Its function is as follows. Magnesium-independent polyisoprenoid diphosphatase that catalyzes the sequential dephosphorylation of presqualene, farnesyl, geranyl and geranylgeranyl diphosphates. Functions in the innate immune response through the dephosphorylation of presqualene diphosphate which acts as a potent inhibitor of the signaling pathways contributing to polymorphonuclear neutrophils activation. May regulate the biosynthesis of cholesterol and related sterols by dephosphorylating presqualene and farnesyl diphosphate, two key intermediates in this biosynthetic pathway. May also play a role in protein prenylation by acting on farnesyl diphosphate and its derivative geranylgeranyl diphosphate, two precursors for the addition of isoprenoid anchors to membrane proteins. Has a lower activity towards phosphatidic acid (PA), but through phosphatidic acid dephosphorylation may participate in the biosynthesis of phospholipids and triacylglycerols. May also act on ceramide-1-P, lysophosphatidic acid (LPA) and sphing-4-enine 1-phosphate/sphingosine-1-phosphate. The polypeptide is Polyisoprenoid diphosphate/phosphate phosphohydrolase PLPP6 (Homo sapiens (Human)).